A 485-amino-acid chain; its full sequence is Trk system potassium uptake protein TrkH (485 aa).

Topologically, residues 1 to 2 are cytoplasmic; sequence MQ. A helical transmembrane segment spans residues 3–29; it reads FRSIIRIVGLLLALFSVTMLAPALVAL. Residues 30-35 lie on the Periplasmic side of the membrane; that stretch reads LYRDGA. The chain crosses the membrane as a helical span at residues 36–57; it reads GVPFVTTFFVLLFCGAMCWFPN. Residues 58 to 65 lie on the Cytoplasmic side of the membrane; sequence RRHKHELK. Residues 66-90 form a helical membrane-spanning segment; the sequence is SRDGFLIVVLFWTVLGSAGSLPFLI. Positions 98 to 109 form an intramembrane region, helical; Pore-forming; that stretch reads VTDAFFESFSAL. An intramembrane segment occupies 110–115; the sequence is TTTGAT. The segment at 110 to 115 is selectivity filter part 1; sequence TTTGAT. K(+)-binding residues include threonine 111 and threonine 112. The Periplasmic portion of the chain corresponds to 116-124; it reads VIVGLDELP. A helical membrane pass occupies residues 125-150; the sequence is KAILFYRQFLQWFGGMGIIVLAVAIL. Over 151–177 the chain is Cytoplasmic; the sequence is PVLGIGGMQLYRAEIPGPVKDTKMTPR. A helical membrane pass occupies residues 178-202; that stretch reads IAETAKALWYIYLSLTIACAVAFWL. Residues 203 to 205 are Periplasmic-facing; it reads AGM. Residue threonine 206 is an intramembrane region. The helical; Pore-forming intramembrane region spans 207-218; sequence PFDAISHSFSTI. Residues 219–224 lie within the membrane without spanning it; that stretch reads AIGGFS. Residues 219 to 224 form a selectivity filter part 2 region; the sequence is AIGGFS. Isoleucine 220 and glycine 221 together coordinate K(+). The Periplasmic portion of the chain corresponds to 225 to 234; that stretch reads THDASMGYFD. The helical intramembrane region spans 235–250; that stretch reads SYAINLITVVFLLISA. A helical transmembrane segment spans residues 276–296; the sequence is FRAFIFIQVLLFLVCFLLLLK. An intramembrane region (helical; Pore-forming) is located at residues 303–318; it reads PYDAFDQALFQTVSIS. The stretch at 319–324 is an intramembrane region; that stretch reads TTAGFT. The segment at 319–324 is selectivity filter part 3; it reads TTAGFT. K(+)-binding residues include threonine 320 and alanine 321. Topologically, residues 325 to 332 are periplasmic; the sequence is TTGFADWP. An intramembrane region (helical) is located at residues 333-344; that stretch reads LFLPVLLLFSSF. The note=Loop between two helices intramembrane region spans 345 to 357; the sequence is IGGCAGSTGGGMK. A helical membrane pass occupies residues 392 to 419; sequence PQRVVDAVWGFFSAYALVFVVCMLGLIA. The Periplasmic segment spans residues 420–421; it reads TG. Residues 422-423 lie within the membrane without spanning it; it reads MD. Positions 424-434 form an intramembrane region, helical; Pore-forming; that stretch reads ELSAFSAVAAT. The stretch at 435–441 is an intramembrane region; sequence LNNLGPG. The interval 436–441 is selectivity filter part 4; sequence NNLGPG. Residues asparagine 437 and leucine 438 each coordinate K(+). The Periplasmic portion of the chain corresponds to 442–453; that stretch reads LGEVALHFGDVN. Positions 454 to 465 form an intramembrane region, helical; it reads DKAKWVLIVSML.

The protein belongs to the TrkH potassium transport family. In terms of assembly, homodimer.

It localises to the cell inner membrane. In terms of biological role, low-affinity potassium transport system. Interacts with trk system potassium uptake protein TrkA and requires TrkE for transport activity. Selective for permeation of potassium ion and rubidium ion over smaller ions such as natrium or litium. This Vibrio parahaemolyticus serotype O3:K6 (strain RIMD 2210633) protein is Trk system potassium uptake protein TrkH.